Consider the following 418-residue polypeptide: 3-phosphoshikimate 1-carboxyvinyltransferase (418 aa).

3-phosphoshikimate is bound by residues Lys26, Ser27, and Arg31. Lys26 provides a ligand contact to phosphoenolpyruvate. Phosphoenolpyruvate-binding residues include Gly97 and Arg125. 3-phosphoshikimate is bound by residues Ser170, Ser171, Gln172, Asp297, Asn320, and Lys324. Phosphoenolpyruvate is bound at residue Gln172. Residue Asp297 is the Proton acceptor of the active site. Positions 328, 375, and 400 each coordinate phosphoenolpyruvate.

The protein belongs to the EPSP synthase family. In terms of assembly, monomer.

The protein localises to the cytoplasm. The catalysed reaction is 3-phosphoshikimate + phosphoenolpyruvate = 5-O-(1-carboxyvinyl)-3-phosphoshikimate + phosphate. The protein operates within metabolic intermediate biosynthesis; chorismate biosynthesis; chorismate from D-erythrose 4-phosphate and phosphoenolpyruvate: step 6/7. In terms of biological role, catalyzes the transfer of the enolpyruvyl moiety of phosphoenolpyruvate (PEP) to the 5-hydroxyl of shikimate-3-phosphate (S3P) to produce enolpyruvyl shikimate-3-phosphate and inorganic phosphate. This is 3-phosphoshikimate 1-carboxyvinyltransferase from Pseudomonas syringae pv. tomato (strain ATCC BAA-871 / DC3000).